Here is a 433-residue protein sequence, read N- to C-terminus: GASFSLHVLSKINSYKSQSTKPIRGVASMAKKSVGDLTSADLKGKKVFVRADLNVPLDDSQNITDDTRIRAAIPTIKHLINNGAKVILSSHLGRPKGVTPKFSLAPLVPRLSELLGLQVVKADDCIGPDVEKLVAELPEGGVLLLENVRFYKEEEKNDPEFAKKLASLADLYVNDAFGTAHRAHASTEGVTKFLKPSVAGFLLQKELDYLVGAVSNPKRPFAAIVGGSKVSSKIGVIESLLEKCDILLLGGGMIFTFYKAQGMSVGSSLVEEDKLDLATSLLAKAKEKGVSLLLPTDVVIADKFAADADSKIVPASGIPDGWMGLDIGPDSIKTFSEALDTTQTVIWNGPMGVFEFEKFAAGTEAIAKKLEEISKKGATTIIGGGDSVAAVEKVGVAEAMSHISTGGGASLELLEGKQLPGVLALNEADPVPV.

The N-terminal 28 residues, 1-28 (GASFSLHVLSKINSYKSQSTKPIRGVAS), are a transit peptide targeting the chloroplast. (2R)-3-phosphoglycerate-binding residues include A51, D52, N54, R68, S90, H91, G93, R94, R149, H181, and R182. G227 is a binding site for ADP. G227 is a CDP binding site. Residues K229 and K233 each contribute to the AMP site. ATP is bound at residue K233. ADP is bound at residue G251. G251 lines the CDP pocket. The AMP site is built by G252 and G324. ATP contacts are provided by G252 and G324. G349 and F354 together coordinate CDP. ADP is bound at residue F354. An AMP-binding site is contributed by E355. ATP-binding residues include E355, D386, and S387. Residue D386 coordinates Mg(2+).

It belongs to the phosphoglycerate kinase family. In terms of assembly, monomer. The cofactor is Mg(2+).

Its subcellular location is the plastid. It is found in the chloroplast. It carries out the reaction (2R)-3-phosphoglycerate + ATP = (2R)-3-phospho-glyceroyl phosphate + ADP. The protein operates within carbohydrate biosynthesis; Calvin cycle. The polypeptide is Phosphoglycerate kinase, chloroplastic (Spinacia oleracea (Spinach)).